A 388-amino-acid polypeptide reads, in one-letter code: Succinate--CoA ligase [ADP-forming] subunit beta (388 aa).

The ATP-grasp domain occupies 9–245 (KELLKSYGLP…KSQENERELK (237 aa)). ATP-binding positions include Lys-46, 53–55 (GRG), Glu-100, Tyr-103, and Glu-108. 2 residues coordinate Mg(2+): Asn-200 and Asp-214. Residues Asn-265 and 322 to 324 (GIV) contribute to the substrate site.

This sequence belongs to the succinate/malate CoA ligase beta subunit family. In terms of assembly, heterotetramer of two alpha and two beta subunits. The cofactor is Mg(2+).

It catalyses the reaction succinate + ATP + CoA = succinyl-CoA + ADP + phosphate. The enzyme catalyses GTP + succinate + CoA = succinyl-CoA + GDP + phosphate. It functions in the pathway carbohydrate metabolism; tricarboxylic acid cycle; succinate from succinyl-CoA (ligase route): step 1/1. Functionally, succinyl-CoA synthetase functions in the citric acid cycle (TCA), coupling the hydrolysis of succinyl-CoA to the synthesis of either ATP or GTP and thus represents the only step of substrate-level phosphorylation in the TCA. The beta subunit provides nucleotide specificity of the enzyme and binds the substrate succinate, while the binding sites for coenzyme A and phosphate are found in the alpha subunit. This is Succinate--CoA ligase [ADP-forming] subunit beta from Psychrobacter cryohalolentis (strain ATCC BAA-1226 / DSM 17306 / VKM B-2378 / K5).